Here is an 86-residue protein sequence, read N- to C-terminus: Protein GOLVEN 1 (86 aa).

The N-terminal stretch at 1–29 (MSCSLRSGLVIVFCFILLLLSSNVGCASA) is a signal peptide. Residues 30–70 (ARRLRSHKHHHHKVASLDVFNGGERRRALGGVETGEEVVVM) constitute a propeptide that is removed on maturation. Sulfotyrosine is present on tyrosine 72. Proline 80 carries the hydroxyproline modification. Residues 84–86 (EKS) constitute a propeptide that is removed on maturation.

The protein belongs to the RGF family. Binds to LRR receptor-like serine/threonine-protein kinases to trigger their dimerization with SERK proteins and subsequent signaling. In terms of tissue distribution, expressed in stems, hypocotyls, cotyledons, leaves, flowers, shoot apex, siliques, stamens and petals.

Its subcellular location is the endoplasmic reticulum. The protein resides in the secreted. Its function is as follows. Signaling peptide (root growth factor) that regulates the pattern of root growth and lateral root development by modulating the length and the number of cortical cells in the root apical meristem (RAM), and the anticlinal asymmetric cell divisions in lateral root initiation cells. Also involved in the regulation of hypocotyl bending and root gravitropism in a PIN2-traffic dependent manner, thus influencing the formation of auxin gradients. Maintains the postembryonic root stem cell niche. The polypeptide is Protein GOLVEN 1 (Arabidopsis thaliana (Mouse-ear cress)).